The chain runs to 185 residues: Peptide deformylase (185 aa).

Residues C109 and H152 each coordinate Fe cation. The active site involves E153. H156 contributes to the Fe cation binding site.

The protein belongs to the polypeptide deformylase family. Fe(2+) is required as a cofactor.

It carries out the reaction N-terminal N-formyl-L-methionyl-[peptide] + H2O = N-terminal L-methionyl-[peptide] + formate. In terms of biological role, removes the formyl group from the N-terminal Met of newly synthesized proteins. Requires at least a dipeptide for an efficient rate of reaction. N-terminal L-methionine is a prerequisite for activity but the enzyme has broad specificity at other positions. The chain is Peptide deformylase from Roseiflexus sp. (strain RS-1).